Here is a 449-residue protein sequence, read N- to C-terminus: Na(+)-translocating NADH-quinone reductase subunit A (449 aa).

The protein belongs to the NqrA family. As to quaternary structure, composed of six subunits; NqrA, NqrB, NqrC, NqrD, NqrE and NqrF.

The enzyme catalyses a ubiquinone + n Na(+)(in) + NADH + H(+) = a ubiquinol + n Na(+)(out) + NAD(+). Its function is as follows. NQR complex catalyzes the reduction of ubiquinone-1 to ubiquinol by two successive reactions, coupled with the transport of Na(+) ions from the cytoplasm to the periplasm. NqrA to NqrE are probably involved in the second step, the conversion of ubisemiquinone to ubiquinol. The sequence is that of Na(+)-translocating NADH-quinone reductase subunit A from Actinobacillus pleuropneumoniae serotype 5b (strain L20).